Here is a 90-residue protein sequence, read N- to C-terminus: Small ribosomal subunit protein uS15c (90 aa).

It belongs to the universal ribosomal protein uS15 family. As to quaternary structure, part of the 30S ribosomal subunit.

The protein resides in the plastid. It localises to the chloroplast. This chain is Small ribosomal subunit protein uS15c (rps15), found in Phaseolus vulgaris (Kidney bean).